The following is a 216-amino-acid chain: MQLLHIDSAITGDQSVSRQLTAQIVEAWKASHPATQVSYLDLVADAPAHFTMDAMAPRTGQTDGLSEAQQRENAVSERLVSQFLAADVVVIGAPFYNFAIPTQLKAWIDRIAQPGRTFQYTANGPEGLAKGKTVIVASSRGGVYSTSEGGRAMEHQESYLQTVLGFFGVTDVRFVRAEGVAMGGDAKAQALAAAAQAIEAHVKAHAANQDRVSQAA.

FMN-binding positions include 15–17 (SVS) and 139–142 (SRGG).

This sequence belongs to the azoreductase type 1 family. In terms of assembly, homodimer. The cofactor is FMN.

The enzyme catalyses 2 a quinone + NADH + H(+) = 2 a 1,4-benzosemiquinone + NAD(+). The catalysed reaction is N,N-dimethyl-1,4-phenylenediamine + anthranilate + 2 NAD(+) = 2-(4-dimethylaminophenyl)diazenylbenzoate + 2 NADH + 2 H(+). In terms of biological role, quinone reductase that provides resistance to thiol-specific stress caused by electrophilic quinones. Also exhibits azoreductase activity. Catalyzes the reductive cleavage of the azo bond in aromatic azo compounds to the corresponding amines. This chain is FMN-dependent NADH:quinone oxidoreductase, found in Acidovorax ebreus (strain TPSY) (Diaphorobacter sp. (strain TPSY)).